We begin with the raw amino-acid sequence, 662 residues long: UvrABC system protein B (662 aa).

One can recognise a Helicase ATP-binding domain in the interval 31 to 188 (DNIEGGEKAQ…NDLVDIQFER (158 aa)). ATP is bound at residue 44–51 (GATGTGKT). A Beta-hairpin motif is present at residues 97–120 (YYDYYQPEAYVPSSDTYIEKDSSV). In terms of domain architecture, Helicase C-terminal spans 435-601 (QIDDLLGEIN…TIKKEIRDLI (167 aa)). In terms of domain architecture, UVR spans 626–661 (KDMIKKLEGQMQEAAGLLDFELAAQIRDMILEIKAM).

It belongs to the UvrB family. Forms a heterotetramer with UvrA during the search for lesions. Interacts with UvrC in an incision complex.

It localises to the cytoplasm. Its function is as follows. The UvrABC repair system catalyzes the recognition and processing of DNA lesions. A damage recognition complex composed of 2 UvrA and 2 UvrB subunits scans DNA for abnormalities. Upon binding of the UvrA(2)B(2) complex to a putative damaged site, the DNA wraps around one UvrB monomer. DNA wrap is dependent on ATP binding by UvrB and probably causes local melting of the DNA helix, facilitating insertion of UvrB beta-hairpin between the DNA strands. Then UvrB probes one DNA strand for the presence of a lesion. If a lesion is found the UvrA subunits dissociate and the UvrB-DNA preincision complex is formed. This complex is subsequently bound by UvrC and the second UvrB is released. If no lesion is found, the DNA wraps around the other UvrB subunit that will check the other stand for damage. In Streptococcus gordonii (strain Challis / ATCC 35105 / BCRC 15272 / CH1 / DL1 / V288), this protein is UvrABC system protein B.